Reading from the N-terminus, the 312-residue chain is Glyoxylate/hydroxypyruvate reductase A (312 aa).

The active site involves R227. The Proton donor role is filled by H275.

Belongs to the D-isomer specific 2-hydroxyacid dehydrogenase family. GhrA subfamily.

It is found in the cytoplasm. The catalysed reaction is glycolate + NADP(+) = glyoxylate + NADPH + H(+). The enzyme catalyses (R)-glycerate + NAD(+) = 3-hydroxypyruvate + NADH + H(+). It catalyses the reaction (R)-glycerate + NADP(+) = 3-hydroxypyruvate + NADPH + H(+). Functionally, catalyzes the NADPH-dependent reduction of glyoxylate and hydroxypyruvate into glycolate and glycerate, respectively. This is Glyoxylate/hydroxypyruvate reductase A from Escherichia coli (strain UTI89 / UPEC).